Consider the following 1453-residue polypeptide: NK-tumor recognition protein (1453 aa).

The 166-residue stretch at 10–175 (HFDIEINREP…ADVRVIDCGV (166 aa)) folds into the PPIase cyclophilin-type domain. Residues 187–625 (KKRKKPTCSE…RWKPGQKPWK (439 aa)) are disordered. Residues 195 to 213 (SEGSDSSSRSSSSSESSSE) are compositionally biased toward low complexity. The span at 221-240 (IRRRRHKRRPKVRHAKKRRK) shows a compositional bias: basic residues. Residues 259–286 (YSERSDVNEKRSVDSNTKREKPVVRPEE) show a composition bias toward basic and acidic residues. A Glycyl lysine isopeptide (Lys-Gly) (interchain with G-Cter in SUMO2) cross-link involves residue lysine 323. The segment covering 329 to 348 (SGRKIKGRGTIRYHTPPRSR) has biased composition (basic residues). Phosphoserine occurs at positions 379, 401, and 416. A compositionally biased stretch (basic and acidic residues) spans 382–402 (KWSKGDKLSDPCSSRWDERSL). The segment covering 403–421 (SQRSRSWSYNGYYSDLSTA) has biased composition (polar residues). The span at 425-460 (DGHHKKHRKEKKFKHKKKAKKQKHCRRHRQTKKRRI) shows a compositional bias: basic residues. Residues 514-531 (SSRDSYRSKSHSRSDSRG) show a composition bias toward basic and acidic residues. Composition is skewed to low complexity over residues 532–546 (SSRS…SRSL) and 554–565 (SSRSGPRRTSIS). Glycyl lysine isopeptide (Lys-Gly) (interchain with G-Cter in SUMO2) cross-links involve residues lysine 576 and lysine 579. Serine 611 is modified (phosphoserine). Lysine 637 is covalently cross-linked (Glycyl lysine isopeptide (Lys-Gly) (interchain with G-Cter in SUMO2)). Serine 646 carries the phosphoserine modification. A compositionally biased stretch (polar residues) spans 651 to 661 (TNIKATVSSSS). Residues 651 to 1453 (TNIKATVSSS…RSPSESSRYS (803 aa)) form a disordered region. Glycyl lysine isopeptide (Lys-Gly) (interchain with G-Cter in SUMO2) cross-links involve residues lysine 654 and lysine 664. Composition is skewed to low complexity over residues 682-726 (RSSG…SSRS) and 736-749 (SQHS…SVSS). The span at 755 to 772 (AMFRSNRKKSVTSHKRHR) shows a compositional bias: basic residues. Residues 773 to 789 (SNSEKTLHSKYVRGREK) show a composition bias toward basic and acidic residues. The span at 799-809 (SRSSLDYSSDS) shows a compositional bias: low complexity. Composition is skewed to basic and acidic residues over residues 820–852 (PEKE…ECPR) and 859–868 (KDHSRDDSVS). Phosphoserine occurs at positions 880, 882, 884, and 900. Residues 887-902 (DVTKSRKSDPRRGSEK) are compositionally biased toward basic and acidic residues. A compositionally biased stretch (acidic residues) spans 903–913 (EEGEASSDSES). The span at 948 to 958 (SSASESESSCS) shows a compositional bias: low complexity. Residues 966-982 (EPQKQKHSKDDLKGDHT) are compositionally biased toward basic and acidic residues. The span at 983–1005 (KRAREKSKAKKDKKHKAPKRKQA) shows a compositional bias: basic residues. The span at 1030 to 1045 (DPKEKRHVSEKCEAVK) shows a compositional bias: basic and acidic residues. 2 positions are modified to phosphoserine: serine 1139 and serine 1148. The segment covering 1170-1180 (QESSMSESKTL) has biased composition (polar residues). Residues 1189–1199 (SSTSVTSPVET) are compositionally biased toward low complexity. Serine 1195 is modified (phosphoserine). Residues lysine 1208 and lysine 1249 each participate in a glycyl lysine isopeptide (Lys-Gly) (interchain with G-Cter in SUMO2) cross-link. The arg/Ser tandem repeat-rich stretch occupies residues 1303–1453 (RSPHRSRSKS…RSPSESSRYS (151 aa)). Low complexity predominate over residues 1322-1346 (SVSYSHSRSRSRSSTSSYRSRSYSR). Residues 1369–1379 (HSHRTSSRSRS) show a composition bias toward basic residues. Residues 1380-1401 (RSSSYDLHSRSRSYTYDSYYSR) show a composition bias toward low complexity. The segment covering 1416–1426 (RGRSYNRRSRS) has biased composition (basic residues).

It is found in the cell membrane. It catalyses the reaction [protein]-peptidylproline (omega=180) = [protein]-peptidylproline (omega=0). Inhibited by cyclosporin A (CsA). Its function is as follows. PPIase that catalyzes the cis-trans isomerization of proline imidic peptide bonds in oligopeptides and may therefore assist protein folding. Component of a putative tumor-recognition complex involved in the function of NK cells. The polypeptide is NK-tumor recognition protein (Mus musculus (Mouse)).